Here is a 127-residue protein sequence, read N- to C-terminus: Small ribosomal subunit protein uS11 (127 aa).

Belongs to the universal ribosomal protein uS11 family. As to quaternary structure, part of the 30S ribosomal subunit. Interacts with proteins S7 and S18. Binds to IF-3.

In terms of biological role, located on the platform of the 30S subunit, it bridges several disparate RNA helices of the 16S rRNA. Forms part of the Shine-Dalgarno cleft in the 70S ribosome. The chain is Small ribosomal subunit protein uS11 from Chlorobium phaeobacteroides (strain DSM 266 / SMG 266 / 2430).